Consider the following 388-residue polypeptide: N-acetylneuraminate epimerase (388 aa).

The first 26 residues, 1 to 26 (MFSLIGAKRQAIGIAALAWSTGAVMA), serve as a signal peptide directing secretion. Kelch repeat units follow at residues 48–92 (MAYV…AAAG), 94–147 (KIFA…VGLA), 149–186 (GRIAIFGGYNKELFDKYLADVGAIDKDKEPEAYRKLVD), 187–232 (SYMG…ATMG), 236–285 (FLLV…VAGA), 307–356 (ANAA…DAPG), and 358–387 (LLVVGGEDRDGKARKEVFLLKWDGKALSVE).

The protein belongs to the NanM family. In terms of assembly, homodimer.

Its subcellular location is the periplasm. The enzyme catalyses N-acetyl-alpha-neuraminate = N-acetyl-beta-neuraminate. Functionally, converts alpha-N-acetylneuranimic acid (Neu5Ac) to the beta-anomer, accelerating the equilibrium between the alpha- and beta-anomers. Probably facilitates sialidase-negative bacteria to compete successfully for limited amounts of extracellular Neu5Ac, which is likely taken up in the beta-anomer. In addition, the rapid removal of sialic acid from solution might be advantageous to the bacterium to damp down host responses. The sequence is that of N-acetylneuraminate epimerase from Brucella suis (strain ATCC 23445 / NCTC 10510).